The following is a 156-amino-acid chain: Small ribosomal subunit protein uS7 (156 aa).

Belongs to the universal ribosomal protein uS7 family. In terms of assembly, part of the 30S ribosomal subunit. Contacts proteins S9 and S11.

One of the primary rRNA binding proteins, it binds directly to 16S rRNA where it nucleates assembly of the head domain of the 30S subunit. Is located at the subunit interface close to the decoding center, probably blocks exit of the E-site tRNA. The chain is Small ribosomal subunit protein uS7 from Shewanella sp. (strain ANA-3).